The sequence spans 453 residues: MNPVLTSRQADELHKSIVAYLTANNLSTTAATLREELSLGEDVFDAEKTAKYQSLLEKKWTSVVRLQKKVMDLESRSVALQSELEHSTPASLSKRKDPTSWLPRSPPRHSLESHQAIVNCLAFHPVFSSLASGSDDSTVKIWDWELGELERTLKGHTRAVLDIDFGGPRGAILLASCSSDSTIKLWDPADEYKNTRTLTGHDHSVSAVRFVTSRPRSENLLVSASGDKTLKVWDITAGYCIKTLQGHTGWVRDVVPSLDGRFLLSSGTDQTARLWDISAADPESKLVMVGHENGIRCCAFAPPASYVHMAALAGLKKPPPSTSTAEFMATGSRDKTIKLWNSTGTCIKTLVGHDNWVSGLVFHPGGKYLLSVADDKTLRCWDLGDDGRCVKVLADAHGQFITCLRWAPGIVKKGADQGAEDTGPLEKTAPSEVQIRCLVATTSVDKVVRIFAD.

The LisH domain maps to Gln-9–Glu-41. The stretch at Val-63–Ser-87 forms a coiled coil. The tract at residues Leu-84–Arg-108 is disordered. WD repeat units follow at residues Ser-113–Lys-154, His-156–Arg-196, Gly-200–Thr-243, Gly-246–Lys-285, Gly-290–Leu-350, Gly-352–Lys-391, and Ala-396–Val-448.

Belongs to the WD repeat LIS1/nudF family. In terms of assembly, self-associates. Interacts with NDL1 and dynein.

It localises to the cytoplasm. The protein localises to the cytoskeleton. Its subcellular location is the spindle pole. Its function is as follows. Positively regulates the activity of the minus-end directed microtubule motor protein dynein. May enhance dynein-mediated microtubule sliding by targeting dynein to the microtubule plus end. Required for nuclear migration during vegetative growth as well as development. Required for retrograde early endosome (EE) transport from the hyphal tip. Required for localization of dynein to the mitotic spindle poles. Recruits additional proteins to the dynein complex at SPBs. This Chaetomium globosum (strain ATCC 6205 / CBS 148.51 / DSM 1962 / NBRC 6347 / NRRL 1970) (Soil fungus) protein is Nuclear distribution protein PAC1-2.